The chain runs to 206 residues: Glycerol-3-phosphate acyltransferase (206 aa).

A run of 6 helical transmembrane segments spans residues 4 to 24 (IIGI…LLVG), 55 to 75 (IIVL…PILL), 78 to 98 (ELHP…PVFA), 112 to 132 (MLLV…LTTL), 137 to 157 (MVSL…ITIG), and 158 to 178 (IVEQ…FVIF).

This sequence belongs to the PlsY family. Probably interacts with PlsX.

The protein resides in the cell membrane. The enzyme catalyses an acyl phosphate + sn-glycerol 3-phosphate = a 1-acyl-sn-glycero-3-phosphate + phosphate. It functions in the pathway lipid metabolism; phospholipid metabolism. Functionally, catalyzes the transfer of an acyl group from acyl-phosphate (acyl-PO(4)) to glycerol-3-phosphate (G3P) to form lysophosphatidic acid (LPA). This enzyme utilizes acyl-phosphate as fatty acyl donor, but not acyl-CoA or acyl-ACP. The chain is Glycerol-3-phosphate acyltransferase from Exiguobacterium sibiricum (strain DSM 17290 / CCUG 55495 / CIP 109462 / JCM 13490 / 255-15).